We begin with the raw amino-acid sequence, 208 residues long: Truncated thymidylate kinase (208 aa).

This sequence belongs to the thymidylate kinase family.

In terms of biological role, catalyzes the conversion of dTMP to dTDP. In Ornithodoros (relapsing fever ticks), this protein is Truncated thymidylate kinase (TMK).